Reading from the N-terminus, the 301-residue chain is GPN-loop GTPase 3 (301 aa).

Residue 13-18 (GAGKST) participates in GTP binding. The Gly-Pro-Asn (GPN)-loop; involved in dimer interface motif lies at 70-72 (GPN). 176 to 179 (SKMD) is a GTP binding site. A disordered region spans residues 212-232 (IAEGQDAEDDESKAPDEKDQV). Over residues 223–232 (SKAPDEKDQV) the composition is skewed to basic and acidic residues.

Belongs to the GPN-loop GTPase family. Heterodimers with GPN1 or GPN2. Binds to RNA polymerase II (RNAPII).

Small GTPase required for proper nuclear import of RNA polymerase II and III (RNAPII and RNAPIII). May act at an RNAP assembly step prior to nuclear import. This chain is GPN-loop GTPase 3, found in Gibberella zeae (strain ATCC MYA-4620 / CBS 123657 / FGSC 9075 / NRRL 31084 / PH-1) (Wheat head blight fungus).